A 4036-amino-acid chain; its full sequence is Hybrid PKS-NRPS synthetase iliA (4036 aa).

The Ketosynthase family 3 (KS3) domain occupies Pro-7 to Ser-439. Residues Cys-181, His-318, and His-359 each act as for beta-ketoacyl synthase activity in the active site. Residues Ile-561–Ala-886 are malonyl-CoA:ACP transacylase (MAT) domain. Residues His-955 to Asp-1092 are N-terminal hotdog fold. The tract at residues His-955–Ala-1262 is dehydratase (DH) domain. A PKS/mFAS DH domain is found at His-955–Ser-1263. The active-site Proton acceptor; for dehydratase activity is the His-987. Residues Leu-1109–Ser-1263 form a C-terminal hotdog fold region. Asp-1168 acts as the Proton donor; for dehydratase activity in catalysis. A methyltransferase (MT) domain region spans residues Glu-1402–Asp-1601. A ketoreductase (KR) domain region spans residues Lys-2136 to Gly-2277. The Carrier 1 domain maps to Glu-2425 to Val-2502. Ser-2462 bears the O-(pantetheine 4'-phosphoryl)serine mark. Disordered regions lie at residues Ala-2520 to Thr-2583 and Asp-2597 to Glu-2621. Residues Ala-2530–Ala-2540 are compositionally biased toward pro residues. Residues Ile-2627–Tyr-3054 are condensation (C) domain. The segment at Ser-3088 to Asp-3485 is adenylation (A) (KR) domain. Positions Ser-3088–Asp-3485 are reductase (RED) domain. In terms of domain architecture, Carrier 2 spans Glu-3596–Gln-3675. Ser-3635 is subject to O-(pantetheine 4'-phosphoryl)serine.

The protein in the C-terminal section; belongs to the NRP synthetase family.

It catalyses the reaction L-tyrosine + holo-[ACP] + 7 malonyl-CoA + acetyl-CoA + 8 AH2 + 2 S-adenosyl-L-methionine + ATP + 4 H(+) = N-[(4E,6E,10S,12Z,14E)-6,10-dimethyl-3-oxohexadeca-4,6,12,14-tetraenoyl]-L-tyrosyl-[ACP] + 8 A + AMP + 2 S-adenosyl-L-homocysteine + 7 CO2 + diphosphate + 8 CoA + 6 H2O. The protein operates within mycotoxin biosynthesis. In terms of biological role, hybrid PKS-NRPS synthetase; part of the gene cluster that mediates the biosynthesis of ilicicolin H, a 4-hydroxy-2-pyridonealkaloid that has potent and broad antifungal activities by inhibiting the mitochondrial respiration chain. IliA assembles the backbone of ilicicolin H. The PKS portion and trans-acting enoyl reductase iliB work together to construct an octaketide, and two methyl groups are introduced by the MT domain during the chain assembly. The nascent chain is then condensed with tyrosine, catalyzed by the C domain, and the resulting PKS-NRPS hybrid is offloaded by the RED domain to form an advanced tetramic acid intermediate. The biosynthesis of ilicicolin H starts with formation of the tetramic acid by the hybrid PKS-NRPS synthetase iliA with the partnering trans-enoyl reductase iliB since iliA lacks a designated enoylreductase (ER) domain. The cytochrome P450 monooxygenase iliC then catalyzes the ring expansion of the tetramate to the acyclic 2-pyridone. The pericyclase iliD further converts the acyclic 2-pyridone into 8-epi-ilicicolin H. 8-epi-ilicicolin H might then spontaneously convert to ilicicolin H, since ilicicolin H is produced in the absence of the epimerase iliE, in contrast to what was observed for the Talaromyces variabilis ilicolin H biosynthetic pathway. This is Hybrid PKS-NRPS synthetase iliA from Neonectria sp. (strain DH2).